The sequence spans 396 residues: Elongation factor Tu (396 aa).

A tr-type G domain is found at Lys10–Val206. Residues Gly19–Thr26 form a G1 region. Position 19 to 26 (Gly19 to Thr26) interacts with GTP. Residue Thr26 coordinates Mg(2+). The interval Gly62–Asn66 is G2. The G3 stretch occupies residues Asp83–Gly86. Residues Asp83–His87 and Asn138–Asp141 each bind GTP. Residues Asn138–Asp141 form a G4 region. The interval Ser176–Leu178 is G5.

The protein belongs to the TRAFAC class translation factor GTPase superfamily. Classic translation factor GTPase family. EF-Tu/EF-1A subfamily. As to quaternary structure, monomer.

The protein localises to the cytoplasm. The enzyme catalyses GTP + H2O = GDP + phosphate + H(+). GTP hydrolase that promotes the GTP-dependent binding of aminoacyl-tRNA to the A-site of ribosomes during protein biosynthesis. The protein is Elongation factor Tu of Kocuria rhizophila (strain ATCC 9341 / DSM 348 / NBRC 103217 / DC2201).